The primary structure comprises 151 residues: Odorant-binding protein (151 aa).

2 cysteine pairs are disulfide-bonded: cysteine 38–cysteine 42 and cysteine 57–cysteine 149.

The protein belongs to the calycin superfamily. Lipocalin family. Expressed in salivary glands, hair and urine.

It is found in the secreted. Functionally, may act as a pheromone. This is Odorant-binding protein from Phodopus sungorus (Striped hairy-footed hamster).